Consider the following 181-residue polypeptide: Adenine phosphoribosyltransferase (181 aa).

It belongs to the purine/pyrimidine phosphoribosyltransferase family. Homodimer.

It is found in the cytoplasm. It catalyses the reaction AMP + diphosphate = 5-phospho-alpha-D-ribose 1-diphosphate + adenine. It functions in the pathway purine metabolism; AMP biosynthesis via salvage pathway; AMP from adenine: step 1/1. Functionally, catalyzes a salvage reaction resulting in the formation of AMP, that is energically less costly than de novo synthesis. The sequence is that of Adenine phosphoribosyltransferase from Psychromonas ingrahamii (strain DSM 17664 / CCUG 51855 / 37).